Reading from the N-terminus, the 388-residue chain is F-box protein At3g49510 (388 aa).

Positions 1–47 (MTTISDLSDDLVGDILSRVPFTSLISVRSTCKKWNALSKNQIFGRKT) constitute an F-box domain.

The sequence is that of F-box protein At3g49510 from Arabidopsis thaliana (Mouse-ear cress).